A 24-amino-acid chain; its full sequence is Brevinin-1Pe (24 aa).

A disulfide bridge links Cys18 with Cys24.

As to expression, expressed by the skin glands.

The protein resides in the secreted. Its function is as follows. Antibacterial activity against Gram-positive bacterium S.aureus and Gram-negative bacterium E.coli. Has activity against C.albicans. The sequence is that of Brevinin-1Pe from Lithobates pipiens (Northern leopard frog).